We begin with the raw amino-acid sequence, 228 residues long: Cytidylate kinase (228 aa).

Gly17–Thr25 contributes to the ATP binding site.

The protein belongs to the cytidylate kinase family. Type 1 subfamily.

It is found in the cytoplasm. The catalysed reaction is CMP + ATP = CDP + ADP. The enzyme catalyses dCMP + ATP = dCDP + ADP. The sequence is that of Cytidylate kinase from Burkholderia pseudomallei (strain 1106a).